Here is a 113-residue protein sequence, read N- to C-terminus: uncharacterized protein (113 aa).

The transit peptide at 1-14 directs the protein to the mitochondrion; it reads MATRNALRIVSRRF. The interval 41–79 is disordered; sequence QKLARQGPGEQAAGSASEAKVAGATASASAESGPKVSED. Positions 55-73 are enriched in low complexity; the sequence is SASEAKVAGATASASAESG.

It is found in the mitochondrion. This is an uncharacterized protein from Arabidopsis thaliana (Mouse-ear cress).